The chain runs to 219 residues: Large ribosomal subunit protein uL3 (219 aa).

The tract at residues 134–153 (RASHGNSRSHNVPGSIGMAQ) is disordered. Position 153 is an N5-methylglutamine (glutamine 153).

Belongs to the universal ribosomal protein uL3 family. As to quaternary structure, part of the 50S ribosomal subunit. Forms a cluster with proteins L14 and L19. In terms of processing, methylated by PrmB.

Its function is as follows. One of the primary rRNA binding proteins, it binds directly near the 3'-end of the 23S rRNA, where it nucleates assembly of the 50S subunit. In Paraburkholderia phytofirmans (strain DSM 17436 / LMG 22146 / PsJN) (Burkholderia phytofirmans), this protein is Large ribosomal subunit protein uL3.